The chain runs to 156 residues: Probable cyclic pyranopterin monophosphate synthase (156 aa).

Residues 74–76 (MCH) and 110–111 (ME) contribute to the substrate site. D125 is an active-site residue.

Belongs to the MoaC family. Homohexamer; trimer of dimers.

The enzyme catalyses (8S)-3',8-cyclo-7,8-dihydroguanosine 5'-triphosphate = cyclic pyranopterin phosphate + diphosphate. It participates in cofactor biosynthesis; molybdopterin biosynthesis. In terms of biological role, catalyzes the conversion of (8S)-3',8-cyclo-7,8-dihydroguanosine 5'-triphosphate to cyclic pyranopterin monophosphate (cPMP). The protein is Probable cyclic pyranopterin monophosphate synthase of Methanospirillum hungatei JF-1 (strain ATCC 27890 / DSM 864 / NBRC 100397 / JF-1).